The primary structure comprises 486 residues: FAD-dependent oxidoreductase domain-containing protein 1 (486 aa).

Residues Glu62 to Leu82 traverse the membrane as a helical segment.

In terms of assembly, associates with components of the mitochondrial respiratory chain complex I. Requires FAD as cofactor.

The protein resides in the mitochondrion inner membrane. Functionally, required for the assembly of the mitochondrial membrane respiratory chain NADH dehydrogenase (Complex I). Involved in mid-late stages of complex I assembly. The chain is FAD-dependent oxidoreductase domain-containing protein 1 from Homo sapiens (Human).